Consider the following 255-residue polypeptide: Triosephosphate isomerase (255 aa).

A substrate-binding site is contributed by 9 to 11 (NWK). Catalysis depends on His-95, which acts as the Electrophile. Glu-167 serves as the catalytic Proton acceptor. Residues Gly-173, Ser-212, and 233-234 (GG) each bind substrate.

Belongs to the triosephosphate isomerase family. As to quaternary structure, homodimer.

Its subcellular location is the cytoplasm. It catalyses the reaction D-glyceraldehyde 3-phosphate = dihydroxyacetone phosphate. Its pathway is carbohydrate biosynthesis; gluconeogenesis. It participates in carbohydrate degradation; glycolysis; D-glyceraldehyde 3-phosphate from glycerone phosphate: step 1/1. Functionally, involved in the gluconeogenesis. Catalyzes stereospecifically the conversion of dihydroxyacetone phosphate (DHAP) to D-glyceraldehyde-3-phosphate (G3P). The chain is Triosephosphate isomerase from Salmonella agona (strain SL483).